Reading from the N-terminus, the 336-residue chain is Phenylalanine--tRNA ligase alpha subunit (336 aa).

E255 lines the Mg(2+) pocket.

This sequence belongs to the class-II aminoacyl-tRNA synthetase family. Phe-tRNA synthetase alpha subunit type 1 subfamily. In terms of assembly, tetramer of two alpha and two beta subunits. Mg(2+) is required as a cofactor.

Its subcellular location is the cytoplasm. The enzyme catalyses tRNA(Phe) + L-phenylalanine + ATP = L-phenylalanyl-tRNA(Phe) + AMP + diphosphate + H(+). In Gemmatimonas aurantiaca (strain DSM 14586 / JCM 11422 / NBRC 100505 / T-27), this protein is Phenylalanine--tRNA ligase alpha subunit.